The primary structure comprises 616 residues: MALLQISEPGLSAAPHQRRLAVGIDLGTTNSLVATVRSGQAETLADAEGRHLLPSVVHYQQQGHSVGYDARTNAAKDPANTISSVKRMMGRSLVDIQQRYPHLPYQLQASENGLPMIATDAGLLNPIRVSADILKALAARATATLEGDLDGVVITVPAYFDDAQRQGTKDAARLAGLHVLRLLNEPTAAAIAYGLDSGQEGVIAVYDLGGGTFDISILRLSRGVFEVLATGGDSALGGDDFDHLLADYIREQAGIADRRDVRVQRELLDAAIDAKIALSDAQAVTVNVAGWQGEITRDQFNELIAALVKRTLLACRRALKDADVEASEVLEVVMVGGSTRVPLVRERVGEFFGRTPLTSIDPDKVVAIGAAIQADILVGNKPDSEMLLLDVIPLSLGLETMGGLVEKVIPRNTTIPVARAQEFTTFKDGQTAMSIHVMQGERELVQDCRSLARFALRGIPALPAGGAHIRVTFQVDADGLLNVTAMEKSTGVESSIQVKPSYGLTDSEIATMIQDSMSYAEQDVKARMLAEQKVEAARVLESLEGALTADAALLSAAERQVIDEATAHLRIVAAENDADAIEQAIKNVDKETQDFAARRMDKSVRVALKGQSVDEV.

The protein belongs to the heat shock protein 70 family.

Functionally, chaperone involved in the maturation of iron-sulfur cluster-containing proteins. Has a low intrinsic ATPase activity which is markedly stimulated by HscB. Involved in the maturation of IscU. The chain is Chaperone protein HscA from Enterobacter sp. (strain 638).